We begin with the raw amino-acid sequence, 352 residues long: Galactokinase (352 aa).

14 to 17 is a substrate binding site; it reads EHTD. Residues S46 and 96–102 contribute to the ATP site; that span reads GAGLSSS. Residues S102 and E134 each contribute to the Mg(2+) site. D146 functions as the Proton acceptor in the catalytic mechanism. Y196 is a binding site for substrate.

Belongs to the GHMP kinase family. GalK subfamily.

It is found in the cytoplasm. The catalysed reaction is alpha-D-galactose + ATP = alpha-D-galactose 1-phosphate + ADP + H(+). The protein operates within carbohydrate metabolism; galactose metabolism. In terms of biological role, catalyzes the transfer of the gamma-phosphate of ATP to D-galactose to form alpha-D-galactose-1-phosphate (Gal-1-P). The polypeptide is Galactokinase (Thermosipho africanus (strain TCF52B)).